The primary structure comprises 442 residues: Protein UNUSUAL FLORAL ORGANS (442 aa).

The tract at residues 1–85 (MDSTVFINNP…RFYSLLFSNT (85 aa)) is interaction with SKP1A. The F-box domain occupies 44–90 (GRIWSKLPPPLLDRVIAFLPPPAFFRTRCVCKRFYSLLFSNTFLETY).

Part of a putative SCF (ASK/Cullin/F-box) ubiquitin ligase complex. Interacts with SKP1A/ASK1, SKP1B/ASK2 and ASK11.

The protein localises to the nucleus. The protein operates within protein modification; protein ubiquitination. Its function is as follows. Component of SCF(ASK-cullin-F-box) E3 ubiquitin ligase complexes, which may mediate the ubiquitination and subsequent proteasomal degradation of target proteins. Considered as a meristem identity factor required for normal growth of the young floral meristem. Acts together with LEAFY to positively regulate the B class floral homeotic genes APETALA3 and PISTILLATA. In this way, operates as a region-specific regulator for petal and stamen development. Alternatively, may play a role as a negative regulator of the C class floral homeotic genes. Interacts together with the SKP1-like protein ASK1 to form a ubiquitin E3 ligase complex and could indirectly promote the ubiquitination and degradation of specific proteins controlling the floral primordia development like repressors of B class floral homeotic genes. This Arabidopsis thaliana (Mouse-ear cress) protein is Protein UNUSUAL FLORAL ORGANS (UFO).